Consider the following 297-residue polypeptide: Mitochondrial citrate transporter A (297 aa).

Solcar repeat units follow at residues 12 to 91, 102 to 188, and 199 to 286; these read PSSL…LKSL, PKTV…LKQM, and LGTA…TMDA. 6 helical membrane passes run 18-31, 61-81, 99-119, 160-180, 192-212, and 251-272; these read IIAG…EIAI, SQWY…AGIR, ISGP…SLLA, FFQG…TRFS, YVAP…GIAG, and KDEG…LIMS.

The protein belongs to the mitochondrial carrier (TC 2.A.29) family.

It is found in the mitochondrion inner membrane. It carries out the reaction citrate(in) + H(+)(in) = citrate(out) + H(+)(out). In terms of biological role, mitochondrial transporter that mediates citrate export from mitochondria to cytoplasm. Both ctpA, ctpB, and ctpD play important roles in citric acid transport across the mitochondrial membrane and function in a redundant manner. The polypeptide is Mitochondrial citrate transporter A (Aspergillus niger (strain ATCC 1015 / CBS 113.46 / FGSC A1144 / LSHB Ac4 / NCTC 3858a / NRRL 328 / USDA 3528.7)).